The primary structure comprises 2249 residues: Endoribonuclease Dcr-1 (2249 aa).

The interval 1–371 (MAFHWCDNNL…SPKVRRLLQT (371 aa)) is essential for miRNA substrate recognition. The interval 1-690 (MAFHWCDNNL…SKQPPTACDI (690 aa)) is important for interaction with loqs isoform PB (loqs-PB). Positions 1–761 (MAFHWCDNNL…AEIDTAHSLA (761 aa)) are helicase domain. Residues 1–1042 (MAFHWCDNNL…VSLELAKERV (1042 aa)) are necessary for processing certain pre-miRNas, such as pre-let 7 and pre-bantam. An ATP-binding site is contributed by 37 to 44 (LGHRSSKE). Positions 371–491 (TLRCFKPEEV…HHRDHNDGSD (121 aa)) are dispensable for activity and substrate recognition. Positions 436–486 (TTEDRQTNRSAARVTPTPTPAHAKPKPSSGANTAQPRTRRRVYTRRHHRDH) are disordered. The span at 472–484 (RTRRRVYTRRHHR) shows a compositional bias: basic residues. The region spanning 485-648 (DHNDGSDTLC…TGDTTEADSD (164 aa)) is the Helicase C-terminal domain. An essential for miRNA substrate recognition region spans residues 496–606 (LIYCNQNHTA…VQCKGRARAA (111 aa)). A dispensable for activity and substrate recognition region spans residues 617 to 761 (SYKSPTVGSV…AEIDTAHSLA (145 aa)). Disordered stretches follow at residues 640-665 (GDTT…PYTF) and 705-757 (LDTS…IDTA). Residues 716-726 (SMSNTSPSESS) show a composition bias toward low complexity. In terms of domain architecture, Dicer dsRNA-binding fold spans 825-920 (AIALVNKYCA…QPIGKEGFRA (96 aa)). Residues 924–957 (DWECFELEPEDEQIVQLSDEPRPGTTKRRQYYYK) are wing domain. Positions 963-1108 (FCDCRPVAGA…WQFLELIQAN (146 aa)) are platform domain. The PAZ domain maps to 1100–1246 (QFLELIQANG…LVPELCTVHP (147 aa)). An essential for production of mature miRNAs from pre-miRNAs. Also important for proper formation of the siRISC complex but is dispensable for biogenesis of siRNAs region spans residues 1147 to 2249 (QYFYVAEICP…KKQGLIAKKD (1103 aa)). The tract at residues 1314 to 1351 (ESKQKESLKDDTINGKDLADVEKKPTSEETQLDKDSKD) is disordered. Serine 1423 carries the phosphoserine modification. The interval 1426–1477 (FWDVSNGESGFKGPKSSQNKQGGKGKAKGPAKPTFNYYDSDNSLGSSYDDDD) is disordered. A compositionally biased stretch (low complexity) spans 1437-1446 (KGPKSSQNKQ). Residues 1462–1471 (YYDSDNSLGS) are compositionally biased toward polar residues. RNase III domains lie at 1698–1919 (ITSA…IECG) and 1993–2150 (FEEF…LDSN). The Mg(2+) site is built by glutamate 1745 and aspartate 1749. A phosphoserine mark is found at serine 1877 and serine 1880. The Mg(2+) site is built by aspartate 1905, glutamate 1908, glutamate 2032, aspartate 2136, and glutamate 2139. Positions 2175 to 2241 (VPKSPIRELL…AKCALRQLKK (67 aa)) constitute a DRBM domain.

The protein belongs to the helicase family. Dicer subfamily. In terms of assembly, component of the miRNA-directed RISC loading complex (miRLC), composed of at least Dcr-1, AGO1 and loqs, which processes pre-miRNAs and loads the resulting miRNAs into the Argonaute 1 (AGO1)-containing RNA-induced silencing complex (miRISC). Interacts (via helicase domain) with dicing cofactor loqs isoform-PB (loqs-PB) (via DRBM 3 domain); this interaction enhances processing of pre-miRNAs by increasing substrate binding affinity of the dicer. Also able to interact with loqs isoforms PA and PC, however the relevance of such interactions are unclear in vivo. Different regions of the Dcr-1-loqs-PB heterodimer collaborate to recognize, bind and position the pre-miRNA for Dcr-1 mediated cleavage. In the absence of authentic miRNA substrates, the heterodimer favors a closed, catalytically incompetent, conformation, whereas binding of authentic pre-miRNA substrates stabilizes the relatively rare open, catalytically competent, conformation of the heterodimer. During substrate recognition, the Dcr-1 PAZ domain and pre-miRNA interact with the DRBM 1 domain of loqs-PB, which likely contributes to substrate recognition and stabilization. At the miRNA binding stage, the Dcr-1 DRBM domain and loqs-PB DRBM domains then bind the pre-miRNA in tandem to form a tight 'belt' around the pre-miRNA stem, the pre-miRNA loop is docked in the loop-binding region formed by DUF283, DRBM and part of the N terminus of Dcr-1, and the loqs-PB DRBM 1 and the wing domain of Dcr-1 act together to bind the 5' and 3' pre-miRNA termini within the PAZ and platform domains of Dcr-1. These interactions between the proteins and their pre-miRNA substrate stabilize a distorted form of the pre-miRNA and position the scissile phosphodiester bonds of the pre-miRNA at the RNase III catalytic cleavage sites of Dcr-1. Following Dcr-1 mediated cleavage, the miRNA duplex remains bound to loqs-PB DRBM 1, which dissociates from the Dcr-1 RNase III 1 domain but remains in contact with the PAZ and wing domains, suggesting that the heterodimer presents the mature miRNA to Ago2 for loading into the RNA-induced silencing complex (miRISC). Interacts with AGO2 and Fmr1 to form a RNA-induced silencing complex (siRISC), a ribonucleoprotein (RNP) complex involved in translation regulation; other components of the complex are RpL5, RpL11, AGO2 and Rm62. Interacts with piwi and vas; these interactions occur in the polar granules. The cofactor is Mg(2+). Mn(2+) serves as cofactor.

The protein localises to the cytoplasm. It is found in the cytosol. The enzyme catalyses Endonucleolytic cleavage to 5'-phosphomonoester.. With respect to regulation, activity towards pre-miRNAs is not inhibited by inorganic phosphate. Functionally, endoribonuclease which functions in microRNA- (miRNA) gene silencing and, independently of its ribonuclease III activity, also acts in the short interfering RNA- (siRNA) gene silencing pathway. Cleaves hairpin precursor miRNAs (pre-miRNA) to generate mature miRNAs (miRNAs) that are between twenty-one to twenty-four nucleotides in length and function in RNA silencing and post-transcriptional regulation of gene expression. Also functions in miRNA loading and assembly of the Argonaute 1 (AGO1)-containing RNA-induced silencing complex (miRISC), with the miRNAs serving as a guide to direct the miRISC to complementary RNAs to degrade them or prevent their translation. Independently of its catalytic activity, functions in the siRNA silencing pathway by promoting assembly of the siRNA-directed Argonaute 2 (AGO2)-containing RISC (siRISC). Required for the proper formation of a stable intermediate (R2) in siRISC assembly, which is formed from the R1 precursor complex (containing Dcr-2, R2D2 and the siRNA) and is used for assembly of the mature (R3) siRISC complex. It is not required for siRNA biogenesis. During embryogenesis, involved in germline fate determination. Post-transcriptionally regulates mei-P26 expression through the microRNA pathway, which in turn post-translationally regulates myc protein levels; involved in regulating cell and tissue growth. The chain is Endoribonuclease Dcr-1 from Drosophila melanogaster (Fruit fly).